Here is a 352-residue protein sequence, read N- to C-terminus: Phosphoribosylformylglycinamidine cyclo-ligase (352 aa).

It belongs to the AIR synthase family.

The protein resides in the cytoplasm. The enzyme catalyses 2-formamido-N(1)-(5-O-phospho-beta-D-ribosyl)acetamidine + ATP = 5-amino-1-(5-phospho-beta-D-ribosyl)imidazole + ADP + phosphate + H(+). It functions in the pathway purine metabolism; IMP biosynthesis via de novo pathway; 5-amino-1-(5-phospho-D-ribosyl)imidazole from N(2)-formyl-N(1)-(5-phospho-D-ribosyl)glycinamide: step 2/2. In Hahella chejuensis (strain KCTC 2396), this protein is Phosphoribosylformylglycinamidine cyclo-ligase.